The sequence spans 184 residues: ADP-ribosylation factor-like protein 8b (184 aa).

Positions 1–18 (MGLWDALLNWLRSLFFKQ) form an intramembrane region, note=Mediates targeting to membranes. Residues 29 to 34 (NAGKTS), 48 to 51 (MIPT), 70 to 74 (DLGGQ), and 129 to 132 (NKID) contribute to the GTP site.

It belongs to the small GTPase superfamily. Arf family. Interacts with tubulin.

It is found in the late endosome membrane. Its subcellular location is the lysosome membrane. It localises to the cytoplasm. The protein resides in the cytoskeleton. The protein localises to the spindle. In terms of biological role, may play a role in lysosome motility. May play a role in chromosome segregation. Functionally, (Microbial infection) Component of tomato mosaic virus (ToMV) RNA replication complexes. Required for tobamovirus multiplication, especially for efficient negative-strand RNA synthesis and viral RNA capping. This is ADP-ribosylation factor-like protein 8b from Arabidopsis thaliana (Mouse-ear cress).